The primary structure comprises 96 residues: Large ribosomal subunit protein eL14 (96 aa).

Belongs to the eukaryotic ribosomal protein eL14 family.

This Desulfurococcus amylolyticus (strain DSM 18924 / JCM 16383 / VKM B-2413 / 1221n) (Desulfurococcus kamchatkensis) protein is Large ribosomal subunit protein eL14.